We begin with the raw amino-acid sequence, 474 residues long: Trigger factor (474 aa).

In terms of domain architecture, PPIase FKBP-type spans 165–250 (GDRVTIDYLG…VKTVSKPDEL (86 aa)). Residues 451–467 (VKKKTASDNKKSNEIKK) show a composition bias toward basic and acidic residues. Residues 451 to 474 (VKKKTASDNKKSNEIKKKSTMKKV) form a disordered region.

Belongs to the FKBP-type PPIase family. Tig subfamily.

The protein localises to the cytoplasm. It carries out the reaction [protein]-peptidylproline (omega=180) = [protein]-peptidylproline (omega=0). In terms of biological role, involved in protein export. Acts as a chaperone by maintaining the newly synthesized protein in an open conformation. Functions as a peptidyl-prolyl cis-trans isomerase. The sequence is that of Trigger factor from Bartonella bacilliformis (strain ATCC 35685 / KC583 / Herrer 020/F12,63).